The following is a 575-amino-acid chain: uncharacterized protein (575 aa).

The HTH marR-type domain maps to 1-120 (MKLIEHYVAL…YNMWLSEVFG (120 aa)). Residues 26 to 49 (LTEIADCLFCTERNAKLILHKLEN) constitute a DNA-binding region (H-T-H motif). The segment at 176–490 (EPKPHLVHGW…FGFLHLLLSE (315 aa)) is solute-binding region.

This sequence in the C-terminal section; belongs to the bacterial solute-binding protein 5 family.

This is an uncharacterized protein from Bacillus subtilis (strain 168).